A 372-amino-acid chain; its full sequence is MLKLVENVVERVSSEETKVQEVQVPQSSIDEELKKIVEQIKARIHVVGVGGAGCNTVNRMMEVGVTGAKIIAVNTDAQDLLKVKAHQKILIGKEITRGLGAGNDPKIGEEAAKESEREIREALEGADMVFVTCGLGGGTGTGAAPVIAEMARKMGALTVSVVTLPFTMEGIRRAKNAEYGLKRLAKASDTVIVIPNDKLLEVAPKLPIQMAFKVADEILVQAVKGITELITKPGLVNLDFNDVRAVMKDGGVAMIGIGESDSEKRALEAAEQALNSPLLDVDISGAKGALISISGADVKLEEAQQIIEYVTRNVDPKAQVIWGIQLEPELEKTIRVMVIVTGITSRYVTFQEETPAPSEEETTPVKIDIPEL.

GTP contacts are provided by residues 51-55 (GAGCN), 138-140 (GTG), glutamate 169, arginine 173, and aspartate 216. The segment at 352 to 372 (EETPAPSEEETTPVKIDIPEL) is disordered.

This sequence belongs to the FtsZ family. In terms of assembly, homodimer. Polymerizes to form a dynamic ring structure in a strictly GTP-dependent manner. Interacts directly with several other division proteins.

The protein resides in the cytoplasm. In terms of biological role, essential cell division protein that forms a contractile ring structure (Z ring) at the future cell division site. The regulation of the ring assembly controls the timing and the location of cell division. One of the functions of the FtsZ ring is to recruit other cell division proteins to the septum to produce a new cell wall between the dividing cells. Binds GTP and shows GTPase activity. The polypeptide is Cell division protein FtsZ 1 (Pyrococcus horikoshii (strain ATCC 700860 / DSM 12428 / JCM 9974 / NBRC 100139 / OT-3)).